The following is a 198-amino-acid chain: Ribonuclease HII (198 aa).

Positions Glu-11–Glu-198 constitute an RNase H type-2 domain. 3 residues coordinate a divalent metal cation: Asp-17, Glu-18, and Asp-109.

This sequence belongs to the RNase HII family. Mn(2+) is required as a cofactor. The cofactor is Mg(2+).

The protein localises to the cytoplasm. The catalysed reaction is Endonucleolytic cleavage to 5'-phosphomonoester.. Endonuclease that specifically degrades the RNA of RNA-DNA hybrids. The polypeptide is Ribonuclease HII (Mannheimia succiniciproducens (strain KCTC 0769BP / MBEL55E)).